A 308-amino-acid polypeptide reads, in one-letter code: Ribosomal RNA large subunit methyltransferase F (308 aa).

It belongs to the methyltransferase superfamily. METTL16/RlmF family.

It is found in the cytoplasm. It carries out the reaction adenosine(1618) in 23S rRNA + S-adenosyl-L-methionine = N(6)-methyladenosine(1618) in 23S rRNA + S-adenosyl-L-homocysteine + H(+). In terms of biological role, specifically methylates the adenine in position 1618 of 23S rRNA. The polypeptide is Ribosomal RNA large subunit methyltransferase F (Escherichia coli O157:H7).